The following is a 334-amino-acid chain: tRNA uridine(34) hydroxylase (334 aa).

One can recognise a Rhodanese domain in the interval 123–217; that stretch reads SDPDVILVDT…YLEEVKAEES (95 aa). C177 (cysteine persulfide intermediate) is an active-site residue.

The protein belongs to the TrhO family.

The catalysed reaction is uridine(34) in tRNA + AH2 + O2 = 5-hydroxyuridine(34) in tRNA + A + H2O. Functionally, catalyzes oxygen-dependent 5-hydroxyuridine (ho5U) modification at position 34 in tRNAs. This is tRNA uridine(34) hydroxylase from Shewanella baltica (strain OS195).